We begin with the raw amino-acid sequence, 310 residues long: N-acetyl-gamma-glutamyl-phosphate reductase (310 aa).

Residue C117 is part of the active site.

The protein belongs to the NAGSA dehydrogenase family. Type 2 subfamily.

It localises to the cytoplasm. The catalysed reaction is N-acetyl-L-glutamate 5-semialdehyde + phosphate + NADP(+) = N-acetyl-L-glutamyl 5-phosphate + NADPH + H(+). The protein operates within amino-acid biosynthesis; L-arginine biosynthesis; N(2)-acetyl-L-ornithine from L-glutamate: step 3/4. Catalyzes the NADPH-dependent reduction of N-acetyl-5-glutamyl phosphate to yield N-acetyl-L-glutamate 5-semialdehyde. The chain is N-acetyl-gamma-glutamyl-phosphate reductase from Brucella melitensis biotype 1 (strain ATCC 23456 / CCUG 17765 / NCTC 10094 / 16M).